Here is a 353-residue protein sequence, read N- to C-terminus: Photosystem II D2 protein (353 aa).

Residue threonine 2 is modified to N-acetylthreonine. Threonine 2 bears the Phosphothreonine mark. A helical transmembrane segment spans residues 41 to 61; the sequence is CAYFALGGWLTGTTFVTSWYT. Histidine 118 is a chlorophyll a binding site. Residues 125-141 form a helical membrane-spanning segment; it reads GFMLRQFELARSVQLRP. 2 residues coordinate pheophytin a: glutamine 130 and asparagine 143. The chain crosses the membrane as a helical span at residues 153-166; sequence VFVSVFLIYPLGQS. Histidine 198 provides a ligand contact to chlorophyll a. Residues 208–228 traverse the membrane as a helical segment; sequence AALLCAIHGATVENTLFEDGD. The a plastoquinone site is built by histidine 215 and phenylalanine 262. Histidine 215 is a Fe cation binding site. A Fe cation-binding site is contributed by histidine 269. A helical membrane pass occupies residues 279-295; it reads GLWMSAIGVVGLALNLR.

Belongs to the reaction center PufL/M/PsbA/D family. In terms of assembly, PSII is composed of 1 copy each of membrane proteins PsbA, PsbB, PsbC, PsbD, PsbE, PsbF, PsbH, PsbI, PsbJ, PsbK, PsbL, PsbM, PsbT, PsbX, PsbY, PsbZ, Psb30/Ycf12, at least 3 peripheral proteins of the oxygen-evolving complex and a large number of cofactors. It forms dimeric complexes. The cofactor is The D1/D2 heterodimer binds P680, chlorophylls that are the primary electron donor of PSII, and subsequent electron acceptors. It shares a non-heme iron and each subunit binds pheophytin, quinone, additional chlorophylls, carotenoids and lipids. There is also a Cl(-1) ion associated with D1 and D2, which is required for oxygen evolution. The PSII complex binds additional chlorophylls, carotenoids and specific lipids..

It is found in the plastid. Its subcellular location is the chloroplast thylakoid membrane. The catalysed reaction is 2 a plastoquinone + 4 hnu + 2 H2O = 2 a plastoquinol + O2. Its function is as follows. Photosystem II (PSII) is a light-driven water:plastoquinone oxidoreductase that uses light energy to abstract electrons from H(2)O, generating O(2) and a proton gradient subsequently used for ATP formation. It consists of a core antenna complex that captures photons, and an electron transfer chain that converts photonic excitation into a charge separation. The D1/D2 (PsbA/PsbD) reaction center heterodimer binds P680, the primary electron donor of PSII as well as several subsequent electron acceptors. D2 is needed for assembly of a stable PSII complex. The protein is Photosystem II D2 protein of Zygnema circumcarinatum (Green alga).